A 105-amino-acid chain; its full sequence is MVKLIESKEAFQEALAAAGDKLVVVDFSATWCGPCKMIKPFFHSLCDKYSNVVFLEVDVDDCQDVAADCEVKCMPTFQFYKKGQKVGEFSGANKEKLEASITEYA.

The 104-residue stretch at 2-105 folds into the Thioredoxin domain; that stretch reads VKLIESKEAF…KLEASITEYA (104 aa). Position 3 is an N6-acetyllysine (Lys-3). An N6-succinyllysine modification is found at Lys-8. Residues Cys-32 and Cys-35 each act as nucleophile in the active site. An intrachain disulfide couples Cys-32 to Cys-35. N6-acetyllysine is present on Lys-39. Cys-62 and Cys-69 each carry S-nitrosocysteine. Residue Cys-73 is modified to S-nitrosocysteine; alternate. An N6-acetyllysine; alternate modification is found at Lys-94. The residue at position 94 (Lys-94) is an N6-succinyllysine; alternate.

It belongs to the thioredoxin family. In terms of assembly, homodimer; disulfide-linked. Interacts with TXNIP through the redox-active site. Interacts with MAP3K5 and CASP3. Interacts with APEX1; the interaction stimulates the FOS/JUN AP-1 DNA-binding activity in a redox-dependent manner. Post-translationally, in the fully reduced protein, both Cys-69 and Cys-73 are nitrosylated in response to nitric oxide (NO). When two disulfide bonds are present in the protein, only Cys-73 is nitrosylated. Cys-73 can serve as donor for nitrosylation of target proteins.

It localises to the nucleus. Its subcellular location is the cytoplasm. The protein resides in the secreted. Its function is as follows. Participates in various redox reactions through the reversible oxidation of its active center dithiol to a disulfide and catalyzes dithiol-disulfide exchange reactions. Plays a role in the reversible S-nitrosylation of cysteine residues in target proteins, and thereby contributes to the response to intracellular nitric oxide. Nitrosylates the active site Cys of CASP3 in response to nitric oxide (NO), and thereby inhibits caspase-3 activity. Induces the FOS/JUN AP-1 DNA binding activity in ionizing radiation (IR) cells through its oxidation/reduction status and stimulates AP-1 transcriptional activity. ADF augments the expression of the interleukin-2 receptor TAC (IL2R/P55). In Mus musculus (Mouse), this protein is Thioredoxin (Txn).